We begin with the raw amino-acid sequence, 422 residues long: 5'-deoxyadenosine deaminase (422 aa).

2 residues coordinate Zn(2+): histidine 57 and histidine 59. Positions 86 and 178 each coordinate substrate. A Zn(2+)-binding site is contributed by histidine 205. 2 residues coordinate substrate: glutamate 208 and aspartate 294. Residue aspartate 294 participates in Zn(2+) binding.

This sequence belongs to the metallo-dependent hydrolases superfamily. MTA/SAH deaminase family. Homotetramer. Zn(2+) is required as a cofactor.

The catalysed reaction is 5'-deoxyadenosine + H2O + H(+) = 5'-deoxyinosine + NH4(+). The enzyme catalyses S-adenosyl-L-homocysteine + H2O + H(+) = S-inosyl-L-homocysteine + NH4(+). It catalyses the reaction S-methyl-5'-thioadenosine + H2O + H(+) = S-methyl-5'-thioinosine + NH4(+). It carries out the reaction adenosine + H2O + H(+) = inosine + NH4(+). It participates in amino-acid biosynthesis; S-adenosyl-L-methionine biosynthesis. Functionally, catalyzes the deamination of three SAM-derived enzymatic products, namely 5'-deoxyadenosine, S-adenosyl-L-homocysteine, and 5'-methylthioadenosine, to produce the inosine analogs. Can also deaminate adenosine. The preferred substrate for this enzyme is 5'-deoxyadenosine, but all these substrates are efficiently deaminated. Likely functions in a S-adenosyl-L-methionine (SAM) recycling pathway from S-adenosyl-L-homocysteine (SAH) produced from SAM-dependent methylation reactions. May also be involved in the recycling of 5'-deoxyadenosine, whereupon the 5'-deoxyribose moiety of 5'-deoxyinosine is further metabolized to deoxyhexoses used for the biosynthesis of aromatic amino acids in methanogens. In Methanococcus maripaludis (strain C5 / ATCC BAA-1333), this protein is 5'-deoxyadenosine deaminase.